The chain runs to 390 residues: MLIKLNDYEKNITQKIKDLKNASGSHSPSIFTMAEQIPELNIKIDSCFLSNPYATALFLRYLKEELIDGQKLRSVLEFYPSQNSIIAKTVADFIGIDPKNVFIGNGAIEIIQAVMHNFVGKKIIVNIPTFSSYYEFAKSETNVVYYQLSKEDNYNLNIEHYLNFVKNENPDSVVLINPNNPDGGYINYEKLRYILSELKYVKNIIIDESFIHFAYENKDYNGINIEYLFKEFHNTIIIKSMSKDFGVAGIRIGYAIMSEDKIRGLLKNGYLWNSSGLSEYFLRLYVRKNFFDEYDKVRREYIQETQTFFRKLSGIKQFKVYPSMANFALVELLDGSSSTDFVAKMLIKYGIYMRTCNDKIGLEGEFIRIASRTLEENDMVLKSICDVFKE.

Lys-243 carries the N6-(pyridoxal phosphate)lysine modification.

Belongs to the class-I pyridoxal-phosphate-dependent aminotransferase family. Pyridoxal 5'-phosphate is required as a cofactor.

It catalyses the reaction O-phospho-L-serine + H(+) = phosphoethanolamine + CO2. It functions in the pathway capsule biogenesis; capsule polysaccharide biosynthesis. In terms of biological role, pyridoxal phosphate (PLP)-dependent decarboxylase involved in the biosynthesis of amidated D-glucuronic acid structures found on the capsular polysaccharide (CPS) of C.jejuni. Catalyzes the decarboxylation of L-serine phosphate to ethanolamine phosphate. Less active with L-threonine phosphate. No activity with L-serine, L-threonine, L-aspartate or L-glutamate. The protein is L-serine phosphate decarboxylase Cj1436c of Campylobacter jejuni subsp. jejuni serotype O:2 (strain ATCC 700819 / NCTC 11168).